A 255-amino-acid polypeptide reads, in one-letter code: 1-(5-phosphoribosyl)-5-[(5-phosphoribosylamino)methylideneamino] imidazole-4-carboxamide isomerase (255 aa).

The active-site Proton acceptor is Asp-8. The Proton donor role is filled by Asp-129.

Belongs to the HisA/HisF family.

Its subcellular location is the cytoplasm. The catalysed reaction is 1-(5-phospho-beta-D-ribosyl)-5-[(5-phospho-beta-D-ribosylamino)methylideneamino]imidazole-4-carboxamide = 5-[(5-phospho-1-deoxy-D-ribulos-1-ylimino)methylamino]-1-(5-phospho-beta-D-ribosyl)imidazole-4-carboxamide. It participates in amino-acid biosynthesis; L-histidine biosynthesis; L-histidine from 5-phospho-alpha-D-ribose 1-diphosphate: step 4/9. This is 1-(5-phosphoribosyl)-5-[(5-phosphoribosylamino)methylideneamino] imidazole-4-carboxamide isomerase from Prochlorococcus marinus subsp. pastoris (strain CCMP1986 / NIES-2087 / MED4).